Here is an 87-residue protein sequence, read N- to C-terminus: Small ribosomal subunit protein bS20 (87 aa).

Positions 1-24 are disordered; that stretch reads MANTAQARKRARQSVERNKHNSSL.

It belongs to the bacterial ribosomal protein bS20 family.

Its function is as follows. Binds directly to 16S ribosomal RNA. The chain is Small ribosomal subunit protein bS20 from Bordetella petrii (strain ATCC BAA-461 / DSM 12804 / CCUG 43448).